The primary structure comprises 296 residues: 4-hydroxy-tetrahydrodipicolinate synthase (296 aa).

Threonine 49 lines the pyruvate pocket. Catalysis depends on tyrosine 137, which acts as the Proton donor/acceptor. Lysine 166 acts as the Schiff-base intermediate with substrate in catalysis. Isoleucine 208 is a binding site for pyruvate.

The protein belongs to the DapA family. In terms of assembly, homotetramer; dimer of dimers.

It localises to the cytoplasm. The enzyme catalyses L-aspartate 4-semialdehyde + pyruvate = (2S,4S)-4-hydroxy-2,3,4,5-tetrahydrodipicolinate + H2O + H(+). The protein operates within amino-acid biosynthesis; L-lysine biosynthesis via DAP pathway; (S)-tetrahydrodipicolinate from L-aspartate: step 3/4. Functionally, catalyzes the condensation of (S)-aspartate-beta-semialdehyde [(S)-ASA] and pyruvate to 4-hydroxy-tetrahydrodipicolinate (HTPA). The chain is 4-hydroxy-tetrahydrodipicolinate synthase from Chlorobium phaeovibrioides (strain DSM 265 / 1930) (Prosthecochloris vibrioformis (strain DSM 265)).